Reading from the N-terminus, the 229-residue chain is Enolase-phosphatase E1 (229 aa).

Belongs to the HAD-like hydrolase superfamily. MasA/MtnC family. As to quaternary structure, monomer. Mg(2+) is required as a cofactor.

It carries out the reaction 5-methylsulfanyl-2,3-dioxopentyl phosphate + H2O = 1,2-dihydroxy-5-(methylsulfanyl)pent-1-en-3-one + phosphate. It functions in the pathway amino-acid biosynthesis; L-methionine biosynthesis via salvage pathway; L-methionine from S-methyl-5-thio-alpha-D-ribose 1-phosphate: step 3/6. The protein operates within amino-acid biosynthesis; L-methionine biosynthesis via salvage pathway; L-methionine from S-methyl-5-thio-alpha-D-ribose 1-phosphate: step 4/6. Functionally, bifunctional enzyme that catalyzes the enolization of 2,3-diketo-5-methylthiopentyl-1-phosphate (DK-MTP-1-P) into the intermediate 2-hydroxy-3-keto-5-methylthiopentenyl-1-phosphate (HK-MTPenyl-1-P), which is then dephosphorylated to form the acireductone 1,2-dihydroxy-3-keto-5-methylthiopentene (DHK-MTPene). This Enterobacter sp. (strain 638) protein is Enolase-phosphatase E1.